The chain runs to 338 residues: Taste receptor type 2 member 39 (338 aa).

Over 1-30 (MLGRCFPPDTKEKQQLRMTKLCDPAESELS) the chain is Extracellular. The chain crosses the membrane as a helical span at residues 31-51 (PFLITLILAVLLAEYLIGIIA). The Cytoplasmic segment spans residues 52–74 (NGFIMAIHAAEWVQNKAVSTSGR). The chain crosses the membrane as a helical span at residues 75–95 (ILVFLSVSRIALQSLMMLEIT). Over 96-116 (ISSTSLSFYSEDAVYYAFKIS) the chain is Extracellular. A helical membrane pass occupies residues 117 to 137 (FIFLNFCSLWFAAWLSFFYFV). At 138-156 (KIANFSYPLFLKLRWRITG) the chain is on the cytoplasmic side. The helical transmembrane segment at 157–177 (LIPWLLWLSVFISFSHSMFCI) threads the bilayer. Over 178 to 205 (NICTVYCNNSFPIHSSNSTKKTYLSEIN) the chain is Extracellular. N-linked (GlcNAc...) asparagine glycosylation is found at asparagine 185 and asparagine 194. The chain crosses the membrane as a helical span at residues 206-226 (VVGLAFFFNLGIVTPLIMFIL). The Cytoplasmic portion of the chain corresponds to 227–262 (TATLLILSLKRHTLHMGSNATGSNDPSMEAHMGAIK). The helical transmembrane segment at 263-283 (AISYFLILYIFNAVALFIYLS) threads the bilayer. The Extracellular portion of the chain corresponds to 284 to 291 (NMFDINSL). The chain crosses the membrane as a helical span at residues 292–312 (WNNLCQIIMAAYPASHSILLI). At 313-338 (QDNPGLRRAWKRLQLRLHLYPKEWTL) the chain is on the cytoplasmic side.

Belongs to the G-protein coupled receptor T2R family. Expressed in subsets of taste receptor cells of the tongue and exclusively in gustducin-positive cells.

Its subcellular location is the membrane. In terms of biological role, receptor that may play a role in the perception of bitterness and is gustducin-linked. May play a role in sensing the chemical composition of the gastrointestinal content. The activity of this receptor may stimulate alpha gustducin, mediate PLC-beta-2 activation and lead to the gating of TRPM5. The polypeptide is Taste receptor type 2 member 39 (TAS2R39) (Homo sapiens (Human)).